We begin with the raw amino-acid sequence, 185 residues long: Large ribosomal subunit protein uL5 (185 aa).

It belongs to the universal ribosomal protein uL5 family. In terms of assembly, part of the 50S ribosomal subunit; part of the 5S rRNA/L5/L18/L25 subcomplex. Contacts the 5S rRNA and the P site tRNA. Forms a bridge to the 30S subunit in the 70S ribosome.

Functionally, this is one of the proteins that bind and probably mediate the attachment of the 5S RNA into the large ribosomal subunit, where it forms part of the central protuberance. In the 70S ribosome it contacts protein S13 of the 30S subunit (bridge B1b), connecting the 2 subunits; this bridge is implicated in subunit movement. Contacts the P site tRNA; the 5S rRNA and some of its associated proteins might help stabilize positioning of ribosome-bound tRNAs. This chain is Large ribosomal subunit protein uL5, found in Streptomyces griseus subsp. griseus (strain JCM 4626 / CBS 651.72 / NBRC 13350 / KCC S-0626 / ISP 5235).